We begin with the raw amino-acid sequence, 454 residues long: tRNA modification GTPase MnmE (454 aa).

R23, E80, and K120 together coordinate (6S)-5-formyl-5,6,7,8-tetrahydrofolate. Residues G216–G377 enclose the TrmE-type G domain. Residue N226 coordinates K(+). Residues N226 to S231, T245 to T251, D270 to G273, N335 to D338, and S358 to R360 contribute to the GTP site. S230 contacts Mg(2+). Residues T245, I247, and T250 each coordinate K(+). T251 contacts Mg(2+). K454 lines the (6S)-5-formyl-5,6,7,8-tetrahydrofolate pocket.

It belongs to the TRAFAC class TrmE-Era-EngA-EngB-Septin-like GTPase superfamily. TrmE GTPase family. In terms of assembly, homodimer. Heterotetramer of two MnmE and two MnmG subunits. K(+) is required as a cofactor.

The protein localises to the cytoplasm. Functionally, exhibits a very high intrinsic GTPase hydrolysis rate. Involved in the addition of a carboxymethylaminomethyl (cmnm) group at the wobble position (U34) of certain tRNAs, forming tRNA-cmnm(5)s(2)U34. This Pectobacterium atrosepticum (strain SCRI 1043 / ATCC BAA-672) (Erwinia carotovora subsp. atroseptica) protein is tRNA modification GTPase MnmE.